A 198-amino-acid chain; its full sequence is Basic helix-loop-helix transcription factor amos (198 aa).

The interval 76 to 131 (EQQQHHLQANPLGKNQGRSPRYWNKQQRSKPYDKLSTSMSSSTSSASSSSSSSAGF) is disordered. A compositionally biased stretch (low complexity) spans 111-129 (STSMSSSTSSASSSSSSSA). In terms of domain architecture, bHLH spans 138 to 190 (KRRLAANARERRRMNSLNDAFDKLRDVVPSLGHDRRLSKYETLQMAQAYIGDL).

As to quaternary structure, efficient DNA binding requires dimerization with another bHLH protein. Interacts with Daughterless (da). As to expression, during embryonic development, expression is seen in a small cluster of ectodermal cells during stage 10 which becomes restricted to 1 cell by stage 11. Expression is lost from this cell in the thorax and then the abdomen. Later expression is restricted to sensory organ precursors. Very transient expression was detected in distal leg disks at approximately 0-4 hours after puparium formation (APF), correlating with the anlage of the innervated tarsal claw.

The protein localises to the nucleus. In terms of biological role, transcription factor involved in early neurogenesis; sensillum basiconica formation and maybe sensillum trichodea development. Promotes multiple dendritic (MD) neuron formation. Required for olfactory sensilla; regulated by lozenge (lz). The sequence is that of Basic helix-loop-helix transcription factor amos (amos) from Drosophila melanogaster (Fruit fly).